Reading from the N-terminus, the 407-residue chain is tRNA (guanine(26)-N(2))-dimethyltransferase (407 aa).

The Trm1 methyltransferase domain maps to 10–400 (AVTHEGRSII…APWGEVLEAV (391 aa)). Arg-50, Arg-82, Asp-99, and Glu-128 together coordinate S-adenosyl-L-methionine.

This sequence belongs to the class I-like SAM-binding methyltransferase superfamily. Trm1 family.

It catalyses the reaction guanosine(26) in tRNA + 2 S-adenosyl-L-methionine = N(2)-dimethylguanosine(26) in tRNA + 2 S-adenosyl-L-homocysteine + 2 H(+). Its function is as follows. Dimethylates a single guanine residue at position 26 of a number of tRNAs using S-adenosyl-L-methionine as donor of the methyl groups. This Aeropyrum pernix (strain ATCC 700893 / DSM 11879 / JCM 9820 / NBRC 100138 / K1) protein is tRNA (guanine(26)-N(2))-dimethyltransferase.